The sequence spans 198 residues: V-type ATP synthase subunit E 1 (198 aa).

Belongs to the V-ATPase E subunit family.

In terms of biological role, produces ATP from ADP in the presence of a proton gradient across the membrane. The chain is V-type ATP synthase subunit E 1 from Clostridium tetani (strain Massachusetts / E88).